We begin with the raw amino-acid sequence, 243 residues long: Probable septum site-determining protein MinC (243 aa).

This sequence belongs to the MinC family. Interacts with MinD and FtsZ.

In terms of biological role, cell division inhibitor that blocks the formation of polar Z ring septums. Rapidly oscillates between the poles of the cell to destabilize FtsZ filaments that have formed before they mature into polar Z rings. Prevents FtsZ polymerization. The sequence is that of Probable septum site-determining protein MinC from Agathobacter rectalis (strain ATCC 33656 / DSM 3377 / JCM 17463 / KCTC 5835 / VPI 0990) (Eubacterium rectale).